Reading from the N-terminus, the 252-residue chain is Membrane protein insertase YidC (252 aa).

The first 20 residues, 1–20 (MRKKFGIIVALIALTTLLSG), serve as a signal peptide directing secretion. Cysteine 21 is lipidated: N-palmitoyl cysteine. Cysteine 21 carries the S-diacylglycerol cysteine lipid modification. Transmembrane regions (helical) follow at residues 59–79 (YGLAIIIVTLFVRLLLMPLNV), 129–149 (LAGCLPILVQMPIFVAMYHAI), 160–180 (FLWFQLGSPDYILPILTGLFT), 206–226 (IMLYVMPIMIGVMAFFFPAAL), and 228–248 (LYWVTGNIFMVFQTLLINKPM).

This sequence belongs to the OXA1/ALB3/YidC family. Type 2 subfamily.

It is found in the cell membrane. In terms of biological role, required for the insertion and/or proper folding and/or complex formation of integral membrane proteins into the membrane. Involved in integration of membrane proteins that insert both dependently and independently of the Sec translocase complex, as well as at least some lipoproteins. In Oceanobacillus iheyensis (strain DSM 14371 / CIP 107618 / JCM 11309 / KCTC 3954 / HTE831), this protein is Membrane protein insertase YidC.